Consider the following 151-residue polypeptide: Putative pre-16S rRNA nuclease (151 aa).

It belongs to the YqgF nuclease family.

The protein resides in the cytoplasm. Its function is as follows. Could be a nuclease involved in processing of the 5'-end of pre-16S rRNA. In Prochlorococcus marinus (strain MIT 9515), this protein is Putative pre-16S rRNA nuclease.